The sequence spans 273 residues: Dermonecrotic toxin LdSicTox-alphaIB1aii (273 aa).

Residue His5 is part of the active site. The Mg(2+) site is built by Glu25 and Asp27. Residue His41 is the Nucleophile of the active site. 2 cysteine pairs are disulfide-bonded: Cys45-Cys51 and Cys47-Cys190. Mg(2+) is bound at residue Asp85. Asn250 carries an N-linked (GlcNAc...) asparagine glycan.

This sequence belongs to the arthropod phospholipase D family. Class II subfamily. It depends on Mg(2+) as a cofactor. Expressed by the venom gland.

The protein localises to the secreted. The enzyme catalyses an N-(acyl)-sphingosylphosphocholine = an N-(acyl)-sphingosyl-1,3-cyclic phosphate + choline. It carries out the reaction an N-(acyl)-sphingosylphosphoethanolamine = an N-(acyl)-sphingosyl-1,3-cyclic phosphate + ethanolamine. The catalysed reaction is a 1-acyl-sn-glycero-3-phosphocholine = a 1-acyl-sn-glycero-2,3-cyclic phosphate + choline. It catalyses the reaction a 1-acyl-sn-glycero-3-phosphoethanolamine = a 1-acyl-sn-glycero-2,3-cyclic phosphate + ethanolamine. Dermonecrotic toxins cleave the phosphodiester linkage between the phosphate and headgroup of certain phospholipids (sphingolipid and lysolipid substrates), forming an alcohol (often choline) and a cyclic phosphate. This toxin acts on sphingomyelin (SM). It may also act on ceramide phosphoethanolamine (CPE), lysophosphatidylcholine (LPC) and lysophosphatidylethanolamine (LPE), but not on lysophosphatidylserine (LPS), and lysophosphatidylglycerol (LPG). It acts by transphosphatidylation, releasing exclusively cyclic phosphate products as second products. Induces dermonecrosis, hemolysis, increased vascular permeability, edema, inflammatory response, and platelet aggregation. The protein is Dermonecrotic toxin LdSicTox-alphaIB1aii of Loxosceles deserta (Desert recluse spider).